Reading from the N-terminus, the 314-residue chain is tRNA uridine(34) hydroxylase (314 aa).

The 95-residue stretch at 135–229 (ADPETLVIDT…YLEQIPAEES (95 aa)) folds into the Rhodanese domain. Cys189 functions as the Cysteine persulfide intermediate in the catalytic mechanism.

Belongs to the TrhO family.

It carries out the reaction uridine(34) in tRNA + AH2 + O2 = 5-hydroxyuridine(34) in tRNA + A + H2O. Functionally, catalyzes oxygen-dependent 5-hydroxyuridine (ho5U) modification at position 34 in tRNAs. The sequence is that of tRNA uridine(34) hydroxylase from Sinorhizobium fredii (strain NBRC 101917 / NGR234).